The primary structure comprises 243 residues: tRNA (guanine-N(1)-)-methyltransferase (243 aa).

S-adenosyl-L-methionine is bound by residues G108 and 127–132 (LGDFVL).

The protein belongs to the RNA methyltransferase TrmD family. Homodimer.

The protein localises to the cytoplasm. It carries out the reaction guanosine(37) in tRNA + S-adenosyl-L-methionine = N(1)-methylguanosine(37) in tRNA + S-adenosyl-L-homocysteine + H(+). In terms of biological role, specifically methylates guanosine-37 in various tRNAs. The polypeptide is tRNA (guanine-N(1)-)-methyltransferase (Streptococcus pyogenes serotype M2 (strain MGAS10270)).